A 297-amino-acid chain; its full sequence is Nitrogenase iron protein (297 aa).

11–18 lines the ATP pocket; the sequence is GKGGIGKS. Cys99 provides a ligand contact to [4Fe-4S] cluster. Residue Arg102 is modified to ADP-ribosylarginine; by dinitrogenase reductase ADP-ribosyltransferase. Cys133 lines the [4Fe-4S] cluster pocket.

It belongs to the NifH/BchL/ChlL family. As to quaternary structure, homodimer. [4Fe-4S] cluster serves as cofactor. Post-translationally, the reversible ADP-ribosylation of Arg-102 inactivates the nitrogenase reductase and regulates nitrogenase activity.

The enzyme catalyses N2 + 8 reduced [2Fe-2S]-[ferredoxin] + 16 ATP + 16 H2O = H2 + 8 oxidized [2Fe-2S]-[ferredoxin] + 2 NH4(+) + 16 ADP + 16 phosphate + 6 H(+). Functionally, the key enzymatic reactions in nitrogen fixation are catalyzed by the nitrogenase complex, which has 2 components: the iron protein and the molybdenum-iron protein. The sequence is that of Nitrogenase iron protein from Mesorhizobium japonicum (strain LMG 29417 / CECT 9101 / MAFF 303099) (Mesorhizobium loti (strain MAFF 303099)).